The following is a 76-amino-acid chain: Omega-agatoxin-Aa3a (76 aa).

6 cysteine pairs are disulfide-bonded: Cys-2/Cys-19, Cys-9/Cys-25, Cys-16/Cys-52, Cys-18/Cys-40, Cys-27/Cys-38, and Cys-59/Cys-67.

The protein belongs to the neurotoxin 04 (omega-agtx) family. 03 (type II/III omega-agtx) subfamily. As to expression, expressed by the venom gland.

It localises to the secreted. Its function is as follows. Omega-agatoxin are antagonist of voltage-gated calcium channels. They block insect neuromuscular transmission presynaptically. Potent blocker of N- (Cav2.2/CACNA1B) and L-type (Cav1/CACNA1) calcium channels. This Agelenopsis aperta (North American funnel-web spider) protein is Omega-agatoxin-Aa3a.